The following is a 432-amino-acid chain: Bifunctional IPC transferase and DIPP synthase (432 aa).

The interval 3–225 (PERAVILAAG…RARRMLVRTA (223 aa)) is mobA-like NTP transferase. Residues 9 to 11 (LAA), Lys-22, and Glu-113 each bind CTP. A Mg(2+)-binding site is contributed by Glu-113. The tract at residues 226–426 (VKGTGDGFVS…LTLYFVVKKV (201 aa)) is CDP-alcohol phosphatidyltransferases. The next 3 helical transmembrane spans lie at 264-284 (FLLG…AGIL), 337-356 (IWYF…SYST), and 385-405 (VFLT…ALFL).

This sequence in the N-terminal section; belongs to the MobA family. The protein in the C-terminal section; belongs to the CDP-alcohol phosphatidyltransferase class-I family. It depends on Mg(2+) as a cofactor.

Its subcellular location is the membrane. It catalyses the reaction 1D-myo-inositol 3-phosphate + CTP + H(+) = CDP-1L-myo-inositol + diphosphate. It carries out the reaction CDP-1L-myo-inositol + 1D-myo-inositol 3-phosphate = bis(1L-myo-inositol) 3,1'-phosphate 1-phosphate + CMP + H(+). Its function is as follows. Involved in biosynthesis of di-myo-inositol phosphate (DIP), a widespread organic solute in microorganisms adapted to hot environments. Catalyzes the condensation of CTP and L-myo-inositol-1-phosphate into CDP-L-myo-inositol, as well as the biosynthesis of di-myo-inositol-1,3'-phosphate-1'-phosphate (DIPP) from CDP-L-myo-inositol and L-myo-inositol-1-phosphate. This Thermococcus kodakarensis (strain ATCC BAA-918 / JCM 12380 / KOD1) (Pyrococcus kodakaraensis (strain KOD1)) protein is Bifunctional IPC transferase and DIPP synthase.